Here is a 359-residue protein sequence, read N- to C-terminus: DNA polymerase IV (359 aa).

Residues I4 to G185 form the UmuC domain. Mg(2+) contacts are provided by D8 and D103. E104 is an active-site residue.

This sequence belongs to the DNA polymerase type-Y family. As to quaternary structure, monomer. Mg(2+) serves as cofactor.

The protein localises to the cytoplasm. The catalysed reaction is DNA(n) + a 2'-deoxyribonucleoside 5'-triphosphate = DNA(n+1) + diphosphate. Poorly processive, error-prone DNA polymerase involved in untargeted mutagenesis. Copies undamaged DNA at stalled replication forks, which arise in vivo from mismatched or misaligned primer ends. These misaligned primers can be extended by PolIV. Exhibits no 3'-5' exonuclease (proofreading) activity. May be involved in translesional synthesis, in conjunction with the beta clamp from PolIII. The protein is DNA polymerase IV of Shewanella frigidimarina (strain NCIMB 400).